We begin with the raw amino-acid sequence, 260 residues long: DNA repair protein RecO (260 aa).

Positions 239–260 are disordered; it reads SAGVAAARKAGGDGSDGDEGEQ.

Belongs to the RecO family.

Its function is as follows. Involved in DNA repair and RecF pathway recombination. This chain is DNA repair protein RecO, found in Sodalis glossinidius (strain morsitans).